Reading from the N-terminus, the 810-residue chain is Volume-regulated anion channel subunit LRRC8A (810 aa).

Met1 carries the N-acetylmethionine modification. The Cytoplasmic portion of the chain corresponds to 1-22 (MIPVTELRYFADTQPAYRILKP). Residues 23–47 (WWDVFTDYISIVMLMIAVFGGTLQV) traverse the membrane as a helical segment. Residues 48-123 (TQDKMICLPC…YENRLHWFAK (76 aa)) lie on the Extracellular side of the membrane. Cystine bridges form between Cys54–Cys310, Cys57–Cys65, and Cys113–Cys295. N-linked (GlcNAc...) asparagine glycosylation is found at Asn66 and Asn83. The helical transmembrane segment at 124-142 (YFPYLVLLHTLIFLACSNF) threads the bilayer. Residues 143 to 264 (WFKFPRTSSK…EEGDIVYRLY (122 aa)) lie on the Cytoplasmic side of the membrane. A Phosphothreonine modification is found at Thr200. Ser202 carries the post-translational modification Phosphoserine. Position 215 is a phosphothreonine (Thr215). Ser217 carries the post-translational modification Phosphoserine. The helical transmembrane segment at 265-286 (MRQTIIKVIKFFLIICYTVYYV) threads the bilayer. Topologically, residues 287 to 316 (HNIKFDVDCTVDIESLTGYRTYRCAHPLAT) are extracellular. Residues 317–341 (LFKILASFYISLVIFYGLICMYTLW) form a helical membrane-spanning segment. Residues 342–810 (WMLRRSLKKY…RLWRADKEQA (469 aa)) are Cytoplasmic-facing. 17 LRR repeats span residues 399–422 (ENKL…RLTK), 423–445 (NAQD…VFDL), 447–468 (ELEV…IAQL), 469–492 (TGLK…AFLR), 493–515 (ENLR…IYSL), 518–542 (LEEL…GLRE), 543–565 (LKRL…VTDV), 567–589 (VHLQ…SLKK), 590–613 (MVNL…IFSL), 614–637 (HNLQ…SFQH), 639–661 (HRLT…IGNL), 662–684 (TNLE…LFYC), 686–707 (KLRY…IGLL), 708–730 (QNLQ…LFQC), 732–753 (KLRA…VGEL), 754–776 (TNLT…LGEC), and 778–801 (LLKR…VKER). The short motif at 706–707 (LL) is the Di-leucine motif element.

This sequence belongs to the LRRC8 family. In terms of assembly, heterohexamer; oligomerizes with other LRRC8 proteins (LRRC8B, LRRC8C, LRRC8D and/or LRRC8E) to form a heterohexamer. Can form homohexamers in vitro, but these have lower conductance than heterohexamers. Detected in a channel complex that contains LRRC8A, LRRC8C and LRRC8E. In vivo, the subunit composition may depend primarily on expression levels, and heterooligomeric channels containing various proportions of the different LRRC8 proteins may coexist. Interact with GRB2. Interacts with NOX4; this interaction prevents the ubiquitin-mediated degradation of LRRC8A. N-glycosylated.

Its subcellular location is the cell membrane. The protein localises to the lysosome membrane. The catalysed reaction is chloride(in) = chloride(out). The enzyme catalyses iodide(out) = iodide(in). It catalyses the reaction taurine(out) = taurine(in). It carries out the reaction L-aspartate(out) = L-aspartate(in). The catalysed reaction is L-glutamate(out) = L-glutamate(in). The enzyme catalyses myo-inositol(out) = myo-inositol(in). It catalyses the reaction 2',3'-cGAMP(out) = 2',3'-cGAMP(in). With respect to regulation, inhibited by (4-[(2-butyl-6,7-dichloro-2-cyclopentyl-2,3-dihydro-1-oxo-1H-inden-5-yl)oxy]butanoic acid), which plugs the channel like a cork in a bottle by binding in the extracellular selectivity filter and sterically occluding ion conduction. Lipids may block conduction in closed heterohexameric channels. Functionally, essential component of the volume-regulated anion channel (VRAC, also named VSOAC channel), an anion channel required to maintain a constant cell volume in response to extracellular or intracellular osmotic changes. The VRAC channel conducts iodide better than chloride and can also conduct organic osmolytes like taurine. Mediates efflux of amino acids, such as aspartate and glutamate, in response to osmotic stress. In complex with LRRC8C or LRRC8E, acts as a transporter of immunoreactive cyclic dinucleotide GMP-AMP (2'-3'-cGAMP), an immune messenger produced in response to DNA virus in the cytosol: mediates both import and export of 2'-3'-cGAMP, thereby promoting transfer of 2'-3'-cGAMP to bystander cells. In contrast, complexes containing LRRC8D inhibit transport of 2'-3'-cGAMP. Required for in vivo channel activity, together with at least one other family member (LRRC8B, LRRC8C, LRRC8D or LRRC8E); channel characteristics depend on the precise subunit composition. Can form functional channels by itself (in vitro). Involved in B-cell development: required for the pro-B cell to pre-B cell transition. Also required for T-cell development. Required for myoblast differentiation: VRAC activity promotes membrane hyperpolarization and regulates insulin-stimulated glucose metabolism and oxygen consumption. Also acts as a regulator of glucose-sensing in pancreatic beta cells: VRAC currents, generated in response to hypotonicity- or glucose-induced beta cell swelling, depolarize cells, thereby causing electrical excitation, leading to increase glucose sensitivity and insulin secretion. Also plays a role in lysosome homeostasis by forming functional lysosomal VRAC channels in response to low cytoplasmic ionic strength condition: lysosomal VRAC channels are necessary for the formation of large lysosome-derived vacuoles, which store and then expel excess water to maintain cytosolic water homeostasis. Acts as a key factor in NLRP3 inflammasome activation by modulating itaconate efflux and mitochondria function. The sequence is that of Volume-regulated anion channel subunit LRRC8A from Rattus norvegicus (Rat).